A 618-amino-acid chain; its full sequence is Indolepyruvate oxidoreductase subunit IorA (618 aa).

4Fe-4S ferredoxin-type domains lie at 559–590 (RPVRVDEEKCDLCLECLNELACPAIVEEDGRV) and 588–617 (GRVFIDPLYCRGCTICLQICPAGAIKPEGK). [4Fe-4S] cluster-binding residues include C568, C571, C574, C580, C597, C600, C603, and C607.

In terms of assembly, heterodimer of the IorA and IorB subunits. It depends on [4Fe-4S] cluster as a cofactor.

The catalysed reaction is indole-3-pyruvate + 2 oxidized [2Fe-2S]-[ferredoxin] + CoA = (indol-3-yl)acetyl-CoA + 2 reduced [2Fe-2S]-[ferredoxin] + CO2 + H(+). Catalyzes the ferredoxin-dependent oxidative decarboxylation of arylpyruvates. This is Indolepyruvate oxidoreductase subunit IorA (iorA) from Methanothermobacter marburgensis (strain ATCC BAA-927 / DSM 2133 / JCM 14651 / NBRC 100331 / OCM 82 / Marburg) (Methanobacterium thermoautotrophicum).